The chain runs to 94 residues: uncharacterized protein (94 aa).

The HTH cro/C1-type domain maps to 13–67 (IQESLDELNVSLREFARAMEIAPSTASRLLTGKAALTPEMAIKLSVVIGSSPQMW). A DNA-binding region (H-T-H motif) is located at residues 24–43 (LREFARAMEIAPSTASRLLT).

Belongs to the VapA/VapI family.

This is an uncharacterized protein from Escherichia coli (strain K12).